We begin with the raw amino-acid sequence, 274 residues long: Dermonecrotic toxin SdSicTox-betaIIB1bii (274 aa).

H5 is a catalytic residue. The Mg(2+) site is built by E25 and D27. Residue H41 is the Nucleophile of the active site. Disulfide bonds link C45-C51 and C47-C190. D85 lines the Mg(2+) pocket.

It belongs to the arthropod phospholipase D family. Class II subfamily. Mg(2+) is required as a cofactor. In terms of tissue distribution, expressed by the venom gland.

Its subcellular location is the secreted. The catalysed reaction is an N-(acyl)-sphingosylphosphocholine = an N-(acyl)-sphingosyl-1,3-cyclic phosphate + choline. The enzyme catalyses an N-(acyl)-sphingosylphosphoethanolamine = an N-(acyl)-sphingosyl-1,3-cyclic phosphate + ethanolamine. It catalyses the reaction a 1-acyl-sn-glycero-3-phosphocholine = a 1-acyl-sn-glycero-2,3-cyclic phosphate + choline. It carries out the reaction a 1-acyl-sn-glycero-3-phosphoethanolamine = a 1-acyl-sn-glycero-2,3-cyclic phosphate + ethanolamine. Its function is as follows. Dermonecrotic toxins cleave the phosphodiester linkage between the phosphate and headgroup of certain phospholipids (sphingolipid and lysolipid substrates), forming an alcohol (often choline) and a cyclic phosphate. This toxin acts on sphingomyelin (SM). It may also act on ceramide phosphoethanolamine (CPE), lysophosphatidylcholine (LPC) and lysophosphatidylethanolamine (LPE), but not on lysophosphatidylserine (LPS), and lysophosphatidylglycerol (LPG). It acts by transphosphatidylation, releasing exclusively cyclic phosphate products as second products. Induces dermonecrosis, hemolysis, increased vascular permeability, edema, inflammatory response, and platelet aggregation. The protein is Dermonecrotic toxin SdSicTox-betaIIB1bii of Sicarius cf. damarensis (strain GJB-2008) (Six-eyed sand spider).